The sequence spans 400 residues: Acetate kinase (400 aa).

Residue asparagine 7 participates in Mg(2+) binding. Lysine 14 provides a ligand contact to ATP. Arginine 92 contributes to the substrate binding site. Aspartate 149 (proton donor/acceptor) is an active-site residue. Residues 209–213 (HLGNG), 283–285 (DAR), and 331–335 (GMGEN) contribute to the ATP site. Mg(2+) is bound at residue glutamate 385.

Belongs to the acetokinase family. In terms of assembly, homodimer. It depends on Mg(2+) as a cofactor. Requires Mn(2+) as cofactor.

Its subcellular location is the cytoplasm. The catalysed reaction is acetate + ATP = acetyl phosphate + ADP. It functions in the pathway metabolic intermediate biosynthesis; acetyl-CoA biosynthesis; acetyl-CoA from acetate: step 1/2. Functionally, catalyzes the formation of acetyl phosphate from acetate and ATP. Can also catalyze the reverse reaction. In Helicobacter acinonychis (strain Sheeba), this protein is Acetate kinase.